Here is a 436-residue protein sequence, read N- to C-terminus: Trigger factor (436 aa).

The 86-residue stretch at 164–249 (GDTVVIDFEG…IHEVKTKELP (86 aa)) folds into the PPIase FKBP-type domain.

It belongs to the FKBP-type PPIase family. Tig subfamily.

Its subcellular location is the cytoplasm. It catalyses the reaction [protein]-peptidylproline (omega=180) = [protein]-peptidylproline (omega=0). Its function is as follows. Involved in protein export. Acts as a chaperone by maintaining the newly synthesized protein in an open conformation. Functions as a peptidyl-prolyl cis-trans isomerase. This is Trigger factor from Ligilactobacillus salivarius (strain UCC118) (Lactobacillus salivarius).